The following is a 521-amino-acid chain: Probable cytochrome P450 12d1 distal, mitochondrial (521 aa).

The N-terminal 19 residues, 1–19, are a transit peptide targeting the mitochondrion; the sequence is MNTLSSARSVAIYVGPVRS. Cys-467 serves as a coordination point for heme.

This sequence belongs to the cytochrome P450 family. It depends on heme as a cofactor.

It localises to the mitochondrion membrane. This is Probable cytochrome P450 12d1 distal, mitochondrial from Drosophila melanogaster (Fruit fly).